Consider the following 400-residue polypeptide: Acetate kinase (400 aa).

Residue asparagine 10 participates in Mg(2+) binding. ATP is bound at residue lysine 17. A substrate-binding site is contributed by arginine 91. Aspartate 150 (proton donor/acceptor) is an active-site residue. ATP-binding positions include 210 to 214 (HLGNG), 285 to 287 (DCR), and 333 to 337 (GIGEN). Glutamate 387 is a Mg(2+) binding site.

The protein belongs to the acetokinase family. In terms of assembly, homodimer. The cofactor is Mg(2+). Requires Mn(2+) as cofactor.

The protein localises to the cytoplasm. It carries out the reaction acetate + ATP = acetyl phosphate + ADP. Its pathway is metabolic intermediate biosynthesis; acetyl-CoA biosynthesis; acetyl-CoA from acetate: step 1/2. Its function is as follows. Catalyzes the formation of acetyl phosphate from acetate and ATP. Can also catalyze the reverse reaction. The polypeptide is Acetate kinase (Salmonella typhi).